Reading from the N-terminus, the 95-residue chain is Large ribosomal subunit protein uL23 (95 aa).

This sequence belongs to the universal ribosomal protein uL23 family. In terms of assembly, part of the 50S ribosomal subunit. Contacts protein L29, and trigger factor when it is bound to the ribosome.

Functionally, one of the early assembly proteins it binds 23S rRNA. One of the proteins that surrounds the polypeptide exit tunnel on the outside of the ribosome. Forms the main docking site for trigger factor binding to the ribosome. The sequence is that of Large ribosomal subunit protein uL23 from Thermodesulfovibrio yellowstonii (strain ATCC 51303 / DSM 11347 / YP87).